Reading from the N-terminus, the 142-residue chain is Matrix protein (142 aa).

Homooligomer. Forms homotetramers. Interacts with phosphoprotein P. Binds to ssRNA.

It localises to the virion. The protein localises to the host cytoplasm. The protein resides in the host cell membrane. Its subcellular location is the host nucleus. In terms of biological role, plays a crucial role in virion assembly and budding. The sequence is that of Matrix protein (M) from Borna disease virus (strain V) (BDV).